Here is a 572-residue protein sequence, read N- to C-terminus: M-phase inducer phosphatase 3 (572 aa).

2 disordered regions span residues 95–117 (NLGDETAPLPTESPDRMSSGKLE) and 304–354 (SPSM…QRRG). A Rhodanese domain is found at 420-527 (LVEKFFIIDC…FFPEYKELCE (108 aa)). Cysteine 476 is an active-site residue.

It belongs to the MPI phosphatase family.

The catalysed reaction is O-phospho-L-tyrosyl-[protein] + H2O = L-tyrosyl-[protein] + phosphate. In terms of biological role, this protein functions as a dosage-dependent inducer in mitotic control. It is a tyrosine protein phosphatase required for progression of the cell cycle. It may directly dephosphorylate p34(cdc2) and activate the p34(cdc2) kinase activity. The polypeptide is M-phase inducer phosphatase 3 (cdc25-3) (Xenopus laevis (African clawed frog)).